Here is a 350-residue protein sequence, read N- to C-terminus: Vetispiradiene synthase 3 (350 aa).

Mg(2+) contacts are provided by Asp-103, Asp-107, Asp-246, Thr-250, and Glu-254. The DDXXD motif motif lies at 103–107 (DDTFD).

This sequence belongs to the terpene synthase family. Tpsa subfamily. The cofactor is Mg(2+).

The protein resides in the cytoplasm. The enzyme catalyses (2E,6E)-farnesyl diphosphate = (-)-vetispiradiene + diphosphate. The protein operates within secondary metabolite biosynthesis; terpenoid biosynthesis. Its function is as follows. Sesquiterpene synthase that catalyzes the formation of vetispiradiene from trans,trans-farnesyl diphosphate. The initial internal cyclization produces the monocyclic intermediate germacrene A. The sequence is that of Vetispiradiene synthase 3 from Hyoscyamus muticus (Egyptian henbane).